Here is a 273-residue protein sequence, read N- to C-terminus: Giardin subunit beta (273 aa).

The tract at residues 1-19 (MSMFTSTRTLTQTMDKPDD) is nonhelical region. Residues 20–273 (LTRSATETAV…GGLSMVTKHQ (254 aa)) are rod. Coiled-coil stretches lie at residues 123–175 (DTLN…YDQL) and 211–263 (NTKL…SKIQ).

Belongs to the SF-assemblin family. In terms of assembly, interacts with BOP1 (via C-terminal WD repeats).

Its subcellular location is the cytoplasm. It localises to the cytoskeleton. Giardins are involved in parasite attachment to the intestinal mucosa and in the cytoskeletal disassembly and reassembly that marks the transition from infectious trophozoite to transmissible cyst. They may interact with other cytoskeletal proteins such as microtubules in the microribbons or crossbridges, to maintain the integrity of the ventral disk. This Giardia intestinalis (Giardia lamblia) protein is Giardin subunit beta.